A 339-amino-acid polypeptide reads, in one-letter code: Fructose-1,6-bisphosphatase class 1 (339 aa).

Residues Glu-91, Asp-113, Leu-115, and Asp-116 each coordinate Mg(2+). Residues 116 to 119, Asn-208, and Lys-274 each bind substrate; that span reads DGSS. Glu-280 lines the Mg(2+) pocket.

It belongs to the FBPase class 1 family. Homotetramer. It depends on Mg(2+) as a cofactor.

It is found in the cytoplasm. It carries out the reaction beta-D-fructose 1,6-bisphosphate + H2O = beta-D-fructose 6-phosphate + phosphate. Its pathway is carbohydrate biosynthesis; gluconeogenesis. The chain is Fructose-1,6-bisphosphatase class 1 from Cupriavidus pinatubonensis (strain JMP 134 / LMG 1197) (Cupriavidus necator (strain JMP 134)).